The primary structure comprises 92 residues: Small nuclear ribonucleoprotein E (92 aa).

The region spanning 18 to 92 is the Sm domain; sequence INLIFRYLQN…NITLLQSVSN (75 aa).

It belongs to the snRNP Sm proteins family. In terms of assembly, core component of the spliceosomal U1, U2, U4 and U5 small nuclear ribonucleoproteins (snRNPs), the building blocks of the spliceosome. Most spliceosomal snRNPs contain a common set of Sm proteins, snrpb, snrpd1, snrpd2, snrpd3, snrpe, snrpf and snrpg that assemble in a heptameric protein ring on the Sm site of the small nuclear RNA to form the core snRNP. Component of the U1 snRNP. The U1 snRNP is composed of the U1 snRNA and the 7 core Sm proteins snrpb, snrpd1, snrpd2, snrpd3, snrpe, snrpf and snrpg, and at least three U1 snRNP-specific proteins snrnp70/u1-70k, snrpa/u1-a and snrpc/u1-c. Component of the U4/U6-U5 tri-snRNP complex composed of the U4, U6 and U5 snRNAs and at least prpf3, prpf4, prpf6, prpf8, prpf31, snrnp200, txnl4a, snrnp40, snrpb, snrpd1, snrpd2, snrpd3, snrpe, snrpf, snrpg, ddx23, cd2bp2, ppih, snu13, eftud2, sart1 and usp39, plus lsm2, lsm3, lsm4, lsm5, lsm6, lsm7 and lsm8. Component of the U7 snRNP complex, or U7 Sm protein core complex, that is composed of the U7 snRNA and at least lsm10, lsm11, snrpb, snrpd3, snrpe, snrpf and snrpg; the complex does not contain snrpd1 and snrpd2. Component of the minor spliceosome, which splices U12-type introns. Part of the SMN-Sm complex that contains smn1, gemin2/sip1, ddx20/gemin3, gemin4, gemin5, gemin6, gemin7, gemin8, strap/unrip and the Sm proteins snrpb, snrpd1, snrpd2, snrpd3, snrpe, snrpf and snrpg; catalyzes core snRNPs assembly. Forms a 6S pICln-Sm complex composed of clns1a/pICln, snrpd1, snrpd2, snrpe, snrpf and snrpg; ring-like structure where clns1a/pICln mimics additional Sm proteins and which is unable to assemble into the core snRNP.

The protein localises to the cytoplasm. Its subcellular location is the cytosol. The protein resides in the nucleus. Its function is as follows. Plays a role in pre-mRNA splicing as a core component of the spliceosomal U1, U2, U4 and U5 small nuclear ribonucleoproteins (snRNPs), the building blocks of the spliceosome. Component of both the pre-catalytic spliceosome B complex and activated spliceosome C complexes. As a component of the minor spliceosome, involved in the splicing of U12-type introns in pre-mRNAs. As part of the U7 snRNP it is involved in histone 3'-end processing. In Danio rerio (Zebrafish), this protein is Small nuclear ribonucleoprotein E (snrpe).